A 534-amino-acid chain; its full sequence is Ankyrin repeat and LEM domain-containing protein 1 (534 aa).

4 ANK repeats span residues 4–35, 39–71, 75–104, and 108–137; these read TACL…DPNL, DGAA…DPNA, EGLT…DPTL, and DGLR…PTQP. The LEM domain occupies 279 to 323; that stretch reads HSSVPPMSDLQLLQALRALGYSPGPVTPFTRGHYLRRLQEAQASR. Residues 370–485 form the GIY-YIG domain; sequence KSSFTYLLLD…ALGLQTLTNQ (116 aa). A Nuclear localization signal motif is present at residues 498–505; the sequence is PPSRRRRL.

In terms of assembly, interacts (via LEM domain) with BANF1; the interaction may favor BANF1 dimerization. In terms of tissue distribution, predominantly expressed in bone marrow, spleen, thymus, colon and ovary. Expressed also to a lesser extent in lymph nodes, liver and testis.

Its subcellular location is the cytoplasm. The protein resides in the nucleus. Functionally, endonuclease that probably plays a role in the DNA damage response and DNA repair. The polypeptide is Ankyrin repeat and LEM domain-containing protein 1 (Mus musculus (Mouse)).